The chain runs to 152 residues: Proteolipid protein 2 (152 aa).

Residues 19 to 137 (FSRTRKGILL…DAYFTFPLRQ (119 aa)) enclose the MARVEL domain. 3 helical membrane-spanning segments follow: residues 25–45 (GILL…FSAG), 48–68 (GYSS…VIYM), and 85–105 (FFRT…VLVE). Asn108 carries N-linked (GlcNAc...) asparagine glycosylation. Residues 112-132 (IAAGVLGLLATCLFGYDAYFT) form a helical membrane-spanning segment.

Its subcellular location is the membrane. In terms of biological role, may play a role in cell differentiation in the intestinal epithelium. This is Proteolipid protein 2 (PLP2) from Oryctolagus cuniculus (Rabbit).